A 116-amino-acid polypeptide reads, in one-letter code: Vitelline membrane protein Vm32E (116 aa).

The first 17 residues, 1–17 (MKIVAFTLVAFVALAGA), serve as a signal peptide directing secretion. The VM domain maps to 36 to 73 (GYPAPPCPTNYLFSCQPNLAPAPCAQEAPAYGSAGAYT).

It belongs to the vitelline membrane family.

The protein localises to the secreted. Its function is as follows. Major early eggshell protein. This chain is Vitelline membrane protein Vm32E, found in Drosophila santomea (Fruit fly).